Here is a 78-residue protein sequence, read N- to C-terminus: Large ribosomal subunit protein eL20 (78 aa).

This sequence belongs to the eukaryotic ribosomal protein eL20 family. In terms of assembly, part of the 50S ribosomal subunit. Binds 23S rRNA.

The polypeptide is Large ribosomal subunit protein eL20 (Pyrobaculum islandicum (strain DSM 4184 / JCM 9189 / GEO3)).